The following is a 340-amino-acid chain: Uroporphyrinogen decarboxylase (340 aa).

Substrate-binding positions include 21-25, Phe-40, Asp-71, Tyr-147, Ser-202, and His-316; that span reads RQAGR.

Belongs to the uroporphyrinogen decarboxylase family. As to quaternary structure, homodimer.

The protein resides in the cytoplasm. It carries out the reaction uroporphyrinogen III + 4 H(+) = coproporphyrinogen III + 4 CO2. It participates in porphyrin-containing compound metabolism; protoporphyrin-IX biosynthesis; coproporphyrinogen-III from 5-aminolevulinate: step 4/4. Functionally, catalyzes the decarboxylation of four acetate groups of uroporphyrinogen-III to yield coproporphyrinogen-III. In Helicobacter hepaticus (strain ATCC 51449 / 3B1), this protein is Uroporphyrinogen decarboxylase.